We begin with the raw amino-acid sequence, 202 residues long: Small ribosomal subunit protein uS4 (202 aa).

The span at 1-13 shows a compositional bias: basic residues; sequence MSRYRGPRLRITR. Residues 1-43 are disordered; the sequence is MSRYRGPRLRITRRLGDLPGLTRKAAKRSHPPGQHGQARRKRS. Positions 90–152 constitute an S4 RNA-binding domain; it reads NRLDNVCFRL…KASKQLAQAN (63 aa).

It belongs to the universal ribosomal protein uS4 family. As to quaternary structure, part of the 30S ribosomal subunit. Contacts protein S5. The interaction surface between S4 and S5 is involved in control of translational fidelity.

Its function is as follows. One of the primary rRNA binding proteins, it binds directly to 16S rRNA where it nucleates assembly of the body of the 30S subunit. In terms of biological role, with S5 and S12 plays an important role in translational accuracy. The sequence is that of Small ribosomal subunit protein uS4 from Prochlorococcus marinus (strain NATL2A).